Consider the following 234-residue polypeptide: Uridylate kinase (234 aa).

K9–G12 lines the ATP pocket. G51 lines the UMP pocket. ATP is bound by residues G52 and R56. UMP contacts are provided by residues D71 and C132–T139. Positions 159, 165, and 168 each coordinate ATP.

It belongs to the UMP kinase family. Homohexamer.

The protein localises to the cytoplasm. The enzyme catalyses UMP + ATP = UDP + ADP. Its pathway is pyrimidine metabolism; CTP biosynthesis via de novo pathway; UDP from UMP (UMPK route): step 1/1. Inhibited by UTP. Its function is as follows. Catalyzes the reversible phosphorylation of UMP to UDP. This is Uridylate kinase from Prochlorococcus marinus (strain MIT 9312).